We begin with the raw amino-acid sequence, 331 residues long: UDP-galactose/UDP-glucose transporter 3 (331 aa).

Transmembrane regions (helical) follow at residues 11–31 (VLLL…QGIL), 49–69 (HLAF…YIMI), 80–100 (APWW…AMGI), 112–132 (VLAK…VYGI), 135–155 (TLPE…FALL), 170–190 (APLG…TNAT), 206–226 (IMLG…FGLP), and 245–265 (WDIL…FLTI). A Di-lysine motif motif is present at residues 327-331 (KKKKA).

This sequence belongs to the nucleotide-sugar transporter family. UDP-galactose:UMP antiporter (TC 2.A.7.11) subfamily. In terms of tissue distribution, mostly expressed in flowers, and, to a lower extent, in roots, stems and leaves.

Its subcellular location is the endoplasmic reticulum membrane. It is found in the golgi apparatus membrane. Essential sugar transporter required for the transport of UDP-glucose from the cytoplasm into the Golgi and the endoplasmic reticulum. Essential for pollen development and involved in embryo sac progress. The polypeptide is UDP-galactose/UDP-glucose transporter 3 (Arabidopsis thaliana (Mouse-ear cress)).